A 584-amino-acid polypeptide reads, in one-letter code: Membrane protein insertase YidC (584 aa).

5 helical membrane-spanning segments follow: residues 5–25, 358–378, 428–448, 478–498, and 516–536; these read SVIGLVLISLIMIVWMQFMAP, FIGNYGLIIIIFAFLIKLVTY, LGGCLPVVLQMPLLFAMFYVF, IPLYGDHIALFPILMAVAVFL, and IYIFPVMMLLFFNNMPAGLGL. The tract at residues 563–584 is disordered; sequence ALSPVVAAPPKAPKKKKNARKR. Residues 574–584 are compositionally biased toward basic residues; the sequence is APKKKKNARKR.

The protein belongs to the OXA1/ALB3/YidC family. Type 1 subfamily. Interacts with the Sec translocase complex via SecD. Specifically interacts with transmembrane segments of nascent integral membrane proteins during membrane integration.

Its subcellular location is the cell inner membrane. Required for the insertion and/or proper folding and/or complex formation of integral membrane proteins into the membrane. Involved in integration of membrane proteins that insert both dependently and independently of the Sec translocase complex, as well as at least some lipoproteins. Aids folding of multispanning membrane proteins. The polypeptide is Membrane protein insertase YidC (Prosthecochloris aestuarii (strain DSM 271 / SK 413)).